The sequence spans 136 residues: Lipoprotein YghG (136 aa).

The first 24 residues, 1-24, serve as a signal peptide directing secretion; the sequence is MSIKQMPGRVLISLLLSVTGLLSG. Cys-25 carries N-palmitoyl cysteine lipidation. Cys-25 carries the S-diacylglycerol cysteine lipid modification.

This sequence belongs to the GspS/AspS pilotin family.

The protein localises to the cell outer membrane. In terms of biological role, involved in a type II secretion system (T2SS, formerly general secretion pathway, GSP) for the export of folded proteins across the outer membrane. In a functional T2SS this subunit helps assemble the outer membrane channel. This Escherichia coli (strain K12) protein is Lipoprotein YghG (yghG).